Here is a 377-residue protein sequence, read N- to C-terminus: Rhodopsin, long-wavelength (377 aa).

At 1–51 (MIAVSGPSYEAFSYGGQARFNNQTVVDKVPPDMLHLIDANWYQYPPLNPMW) the chain is on the extracellular side. N22 is a glycosylation site (N-linked (GlcNAc...) asparagine). A helical membrane pass occupies residues 52–76 (HGILGFVIGMLGFVSAMGNGMVVYI). The Cytoplasmic portion of the chain corresponds to 77–88 (FLSTKSLRTPSN). Residues 89–113 (LFVINLAISNFLMMFCMSPPMVINC) traverse the membrane as a helical segment. The Extracellular portion of the chain corresponds to 114-128 (YYETWVLGPLFCQIY). C125 and C202 are oxidised to a cystine. Residues 129–148 (AMLGSLFGCGSIWTMTMIAF) form a helical membrane-spanning segment. Topologically, residues 149 to 167 (DRYNVIVKGLSGKPLSING) are cytoplasmic. Residues 168 to 191 (ALIRIIAIWLFSLGWTIAPMFGWN) traverse the membrane as a helical segment. Residues 192–215 (RYVPEGNMTACGTDYFNRGLLSAS) lie on the Extracellular side of the membrane. Residue N198 is glycosylated (N-linked (GlcNAc...) asparagine). Residues 216-243 (YLVCYGIWVYFVPLFLIIYSYWFIIQAV) traverse the membrane as a helical segment. Over 244–278 (AAHEKNMREQAKKMNVASLRSSENQNTSAECKLAK) the chain is Cytoplasmic. Residues 279 to 302 (VALMTISLWFMAWTPYLVINFSGI) form a helical membrane-spanning segment. Residues 303 to 309 (FNLVKIS) are Extracellular-facing. The chain crosses the membrane as a helical span at residues 310–334 (PLFTIWGSLFAKANAVYNPIVYGIS). The residue at position 321 (K321) is an N6-(retinylidene)lysine. The Cytoplasmic portion of the chain corresponds to 335-377 (HPKYRAALFAKFPSLACAAEPSSDAVSTTSGTTTVTDNEKSNA). Residues 357 to 370 (SDAVSTTSGTTTVT) are compositionally biased toward low complexity. The disordered stretch occupies residues 357–377 (SDAVSTTSGTTTVTDNEKSNA).

The protein belongs to the G-protein coupled receptor 1 family. Opsin subfamily. Post-translationally, phosphorylated on some or all of the serine and threonine residues present in the C-terminal region.

It is found in the membrane. Visual pigments are the light-absorbing molecules that mediate vision. They consist of an apoprotein, opsin, covalently linked to 11-cis-retinal. This chain is Rhodopsin, long-wavelength, found in Apis mellifera (Honeybee).